We begin with the raw amino-acid sequence, 233 residues long: 2-C-methyl-D-erythritol 4-phosphate cytidylyltransferase (233 aa).

This sequence belongs to the IspD/TarI cytidylyltransferase family. IspD subfamily.

It catalyses the reaction 2-C-methyl-D-erythritol 4-phosphate + CTP + H(+) = 4-CDP-2-C-methyl-D-erythritol + diphosphate. Its pathway is isoprenoid biosynthesis; isopentenyl diphosphate biosynthesis via DXP pathway; isopentenyl diphosphate from 1-deoxy-D-xylulose 5-phosphate: step 2/6. In terms of biological role, catalyzes the formation of 4-diphosphocytidyl-2-C-methyl-D-erythritol from CTP and 2-C-methyl-D-erythritol 4-phosphate (MEP). The polypeptide is 2-C-methyl-D-erythritol 4-phosphate cytidylyltransferase (Geotalea uraniireducens (strain Rf4) (Geobacter uraniireducens)).